Consider the following 412-residue polypeptide: Alpha-ketoglutarate-dependent sulfonate dioxygenase (412 aa).

Phosphoserine is present on serine 52. 2 residues coordinate Fe cation: histidine 218 and aspartate 220. 2-oxoglutarate contacts are provided by threonine 245 and tryptophan 352. Histidine 367 contributes to the Fe cation binding site. Positions 379 and 383 each coordinate 2-oxoglutarate.

This sequence belongs to the TfdA dioxygenase family. Fe(2+) serves as cofactor.

It functions in the pathway organosulfur degradation; alkanesulfonate degradation. Acts as an alpha-ketoglutarate-dependent dioxygenase active on sulfonates. Although taurine is a poor substrate, a variety of other sulfonates are utilized, with the best natural substrates being isethionate and taurocholate. The polypeptide is Alpha-ketoglutarate-dependent sulfonate dioxygenase (JLP1) (Saccharomyces cerevisiae (strain ATCC 204508 / S288c) (Baker's yeast)).